A 427-amino-acid chain; its full sequence is Glutamate-1-semialdehyde 2,1-aminomutase (427 aa).

Lys-265 is subject to N6-(pyridoxal phosphate)lysine.

Belongs to the class-III pyridoxal-phosphate-dependent aminotransferase family. HemL subfamily. As to quaternary structure, homodimer. It depends on pyridoxal 5'-phosphate as a cofactor.

The protein resides in the cytoplasm. The catalysed reaction is (S)-4-amino-5-oxopentanoate = 5-aminolevulinate. It functions in the pathway porphyrin-containing compound metabolism; protoporphyrin-IX biosynthesis; 5-aminolevulinate from L-glutamyl-tRNA(Glu): step 2/2. This Pseudomonas aeruginosa (strain LESB58) protein is Glutamate-1-semialdehyde 2,1-aminomutase.